Consider the following 444-residue polypeptide: Alanyl-tRNA editing protein Aarsd1 (444 aa).

Zn(2+) is bound by residues histidine 109 and histidine 113. Serine 174 carries the post-translational modification Phosphoserine. Zn(2+) is bound by residues cysteine 209 and histidine 213.

It belongs to the class-II aminoacyl-tRNA synthetase family. Alax-L subfamily. Requires Zn(2+) as cofactor.

It is found in the cytoplasm. Functions in trans to edit the amino acid moiety from incorrectly charged tRNA(Ala). The chain is Alanyl-tRNA editing protein Aarsd1 (AARSD1) from Bos taurus (Bovine).